We begin with the raw amino-acid sequence, 416 residues long: Adenylosuccinate synthetase (416 aa).

Residues 13 to 19 (GDEGKGK) and 41 to 43 (GHT) contribute to the GTP site. Residue D14 is the Proton acceptor of the active site. Residues D14 and G41 each coordinate Mg(2+). Residues 14–17 (DEGK), 39–42 (NAGH), T126, R140, Q220, T235, and R299 each bind IMP. The Proton donor role is filled by H42. Position 295-301 (295-301 (VSTGRKR)) interacts with substrate. Residues R301, 327–329 (KLD), and 405–407 (STS) contribute to the GTP site.

It belongs to the adenylosuccinate synthetase family. Homodimer. The cofactor is Mg(2+).

It localises to the cytoplasm. It catalyses the reaction IMP + L-aspartate + GTP = N(6)-(1,2-dicarboxyethyl)-AMP + GDP + phosphate + 2 H(+). Its pathway is purine metabolism; AMP biosynthesis via de novo pathway; AMP from IMP: step 1/2. Functionally, plays an important role in the de novo pathway of purine nucleotide biosynthesis. Catalyzes the first committed step in the biosynthesis of AMP from IMP. This Campylobacter jejuni subsp. jejuni serotype O:2 (strain ATCC 700819 / NCTC 11168) protein is Adenylosuccinate synthetase.